Consider the following 873-residue polypeptide: Leucine--tRNA ligase (873 aa).

Positions 47 to 57 (PYPSGKLHMGH) match the 'HIGH' region motif. A 'KMSKS' region motif is present at residues 636-640 (KMSKS). Lys-639 lines the ATP pocket.

It belongs to the class-I aminoacyl-tRNA synthetase family.

The protein resides in the cytoplasm. The enzyme catalyses tRNA(Leu) + L-leucine + ATP = L-leucyl-tRNA(Leu) + AMP + diphosphate. The chain is Leucine--tRNA ligase from Acinetobacter baylyi (strain ATCC 33305 / BD413 / ADP1).